The sequence spans 457 residues: Multidrug resistance protein MdtK (457 aa).

The next 12 helical transmembrane spans lie at 11–31 (LLAL…MGFV), 53–73 (IWLP…PVIA), 93–113 (WLAG…GYII), 127–147 (AVGY…FQVA), 160–180 (GMVM…IFIY), 189–209 (GGVG…LAMV), 243–263 (LPIA…ALLV), 276–296 (IALN…AAVT), 314–334 (AART…IFTV), 350–370 (VVTL…SDSI), 387–407 (IFYI…YILA), and 418–438 (PAGF…MMML).

Belongs to the multi antimicrobial extrusion (MATE) (TC 2.A.66.1) family. MdtK subfamily.

It is found in the cell inner membrane. In terms of biological role, multidrug efflux pump that functions probably as a Na(+)/drug antiporter. The polypeptide is Multidrug resistance protein MdtK (Escherichia coli O127:H6 (strain E2348/69 / EPEC)).